Reading from the N-terminus, the 273-residue chain is Flagellin FljN (273 aa).

The protein belongs to the bacterial flagellin family. As to quaternary structure, in C.crescentus, the flagellar filament is composed of multiple flagellins of 29 kDa; 27 kDa and 25 kDa.

The protein resides in the secreted. It is found in the bacterial flagellum. In terms of biological role, flagellin is the subunit protein which polymerizes to form the filaments of bacterial flagella. The sequence is that of Flagellin FljN (fljN) from Caulobacter vibrioides (strain ATCC 19089 / CIP 103742 / CB 15) (Caulobacter crescentus).